Reading from the N-terminus, the 856-residue chain is Villin-like protein (856 aa).

Gelsolin-like repeat units lie at residues 22-74 (RKMV…EAQG), 146-186 (VSAT…SEKA), 263-307 (LVVL…QERK), 401-450 (LHRQ…DEIE), 521-561 (TRTM…DQRE), and 624-665 (LVLA…WKEA). The tract at residues 762-796 (SQDSSENDLVRSPKSAGSRTSSSVSSTSATINGGL) is disordered. The segment covering 776–791 (SAGSRTSSSVSSTSAT) has biased composition (low complexity). In terms of domain architecture, HP spans 790–856 (ATINGGLRRE…RQEKKQLGFF (67 aa)).

Belongs to the villin/gelsolin family. Ubiquitously expressed in 16 tissues examined.

Its function is as follows. Possible tumor suppressor. In Homo sapiens (Human), this protein is Villin-like protein (VILL).